Here is a 385-residue protein sequence, read N- to C-terminus: MAAAAARWNHVWVGTDTGILKGVNLQRKQAANFTASGQPRREEAVSALCWGAGGETQILVGCADGTVKHFSTEEGRFQGQRQCPGGEGTFRGLAQVDGTLITCVDSGILRVWTDKDKEASSDPVLELRVGPGVCRMRQDPARPHIVATGGKENALKVWDLQGSEEPLFRAKNVRNDWLDLRVPVWDQDIQFLPESQKLVTCTGYHQVRVYDPASPQRRPVLEATYGEYPLTAVTLTPEGNSVIVGNTHGQLAEIDLRQGRLLGCLKGLAGSVRGLQCHPSKPLLASCGLDRVLRIHRIRNPRGLEHKVYLKSQLNCLLLSGRDNWEDEPQEPQEPNKVPSEDTETDELWASLEAAAKRKLPDWEQTQGALQARRRKKKRPGSTSS.

6 WD repeats span residues 40–80 (RREE…FQGQ), 83–122 (CPGG…ASSD), 128–168 (RVGP…EPLF), 179–220 (DLRV…RRPV), 224–266 (TYGE…GCLK), and 267–306 (GLAG…GLEH). S214 is modified (phosphoserine). K311 is modified (N6-methyllysine). Residues 320–385 (SGRDNWEDEP…KKKRPGSTSS (66 aa)) form a required for nucleolar and nuclear location region. The interval 323 to 385 (DNWEDEPQEP…KKKRPGSTSS (63 aa)) is disordered. A compositionally biased stretch (basic residues) spans 372-385 (ARRRKKKRPGSTSS).

As to quaternary structure, isoform 1 interacts (through WDR repeats) with NVL; the interaction is independent of RNA or pre-60S ribosome particles. Isoform 2 does not interact with NVL. Interacts with MTREX; the interaction dissociation in a late stage of rRNA synthesis is required for appropriate maturation of pre-60S particles and depends on the ATPase activity of NVL.

It localises to the nucleus. It is found in the nucleolus. Its function is as follows. Regulatory protein of the MTREX-exosome complex involved in the synthesis of the 60S ribosomal subunit. Participates in an early cleavage of the pre-rRNA processing pathway in cooperation with NVL. This is WD repeat-containing protein 74 (WDR74) from Bos taurus (Bovine).